A 257-amino-acid chain; its full sequence is MSKPLILVTNDDGISAPGIRSLIAVMQEIGTVVVVAPDSPQSAMGHAITINSTLHLNKISAENAAVTEYSCSGTPVDCVKLAVNEILKQKPDLCVSGVNHGSNSSINVIYSGTMSAAVEAGIEGIPAIGFSLLDYDWNADFETFKPYIKKIALEVLQKGLPDSVVLNVNFPKRKEEDLKGIKICRQAKAMWEEKFDKRKTPQGKDYYWLTGEFVNHDKGEDTDEWALQNGYISVVPVQFDMTAHHAIQALNNWDLNK.

Residues D11, D12, S42, and N99 each contribute to the a divalent metal cation site.

This sequence belongs to the SurE nucleotidase family. Requires a divalent metal cation as cofactor.

It is found in the cytoplasm. The catalysed reaction is a ribonucleoside 5'-phosphate + H2O = a ribonucleoside + phosphate. Functionally, nucleotidase that shows phosphatase activity on nucleoside 5'-monophosphates. The protein is 5'-nucleotidase SurE of Flavobacterium psychrophilum (strain ATCC 49511 / DSM 21280 / CIP 103535 / JIP02/86).